The sequence spans 882 residues: Alanine--tRNA ligase (882 aa).

Histidine 570, histidine 574, cysteine 672, and histidine 676 together coordinate Zn(2+).

It belongs to the class-II aminoacyl-tRNA synthetase family. Requires Zn(2+) as cofactor.

It localises to the cytoplasm. It carries out the reaction tRNA(Ala) + L-alanine + ATP = L-alanyl-tRNA(Ala) + AMP + diphosphate. In terms of biological role, catalyzes the attachment of alanine to tRNA(Ala) in a two-step reaction: alanine is first activated by ATP to form Ala-AMP and then transferred to the acceptor end of tRNA(Ala). Also edits incorrectly charged Ser-tRNA(Ala) and Gly-tRNA(Ala) via its editing domain. The polypeptide is Alanine--tRNA ligase (Xanthomonas campestris pv. campestris (strain 8004)).